The chain runs to 209 residues: Casparian strip membrane protein 1 (209 aa).

At 1–46 (MSSGANATTIDVPETRAEAKGKAPLIAAPIVATTKATPHPNAGWKK) the chain is on the cytoplasmic side. A helical membrane pass occupies residues 47–67 (GLAIFDFLLRLAAIAATLAAA). Over 68–95 (TTMGTTDETLPFFTQFFQFQASFDDLPA) the chain is Extracellular. Residues 96–116 (FMFFVVATAIASGYLALSLPF) traverse the membrane as a helical segment. Over 117 to 137 (SLVSIFRPHAQGIRLLLIISD) the chain is Cytoplasmic. A helical transmembrane segment spans residues 138 to 158 (TVMLALTTAGAASATAIVYLA). Over 159 to 183 (HNGDSSANWIAICQQFTDFCQSVSG) the chain is Extracellular. Residues 184–204 (AVVASFIAVVIFMLLVMMSAL) form a helical membrane-spanning segment. The Cytoplasmic portion of the chain corresponds to 205-209 (ALRKH).

It belongs to the Casparian strip membrane proteins (CASP) family. Homodimer and heterodimers.

It is found in the cell membrane. Regulates membrane-cell wall junctions and localized cell wall deposition. Required for establishment of the Casparian strip membrane domain (CSD) and the subsequent formation of Casparian strips, a cell wall modification of the root endodermis that determines an apoplastic barrier between the intraorganismal apoplasm and the extraorganismal apoplasm and prevents lateral diffusion. The polypeptide is Casparian strip membrane protein 1 (Vitis vinifera (Grape)).